The following is a 229-amino-acid chain: MVEFTKRLLLERNFERTNRPITGPIVVHAVAGAGKSSVINTVSLTFQLICWTTLPEEKASFNCLHLRHLDGPAFPGAFVDEYQLADTDLSEAAFLFGDPLQYPGPAAQVPHFVKLFSHRCGLNSASLIRELGIAFEASKLDSVQHLDPYSSDPEGTILAFEPEVQAALASHSLDFLCLDEFRGKQWPVCTLYVSTKNLCDLDRPSVYVALTRHYERLLIMSFDAADTSA.

Residues 1-114 (MVEFTKRLLL…PAAQVPHFVK (114 aa)) enclose the (+)RNA virus helicase ATP-binding domain. Residues 115-229 (LFSHRCGLNS…MSFDAADTSA (115 aa)) form the (+)RNA virus helicase C-terminal domain.

The protein belongs to the Tymovirales TGBp1 protein family. As to quaternary structure, homodimer and homooligomer. Interacts with capsid protein. Interacts with host AGO1; this interaction targets the host protein for degradation, thereby suppressing the antiviral RNA silencing.

It localises to the host cytoplasm. Transports viral genome to neighboring plant cells directly through plasmosdesmata, without any budding. The movement protein allows efficient cell to cell propagation, by bypassing the host cell wall barrier. Increases plasmodesma size exclusion limit. Acts as a suppressor of RNA-mediated gene silencing, also known as post-transcriptional gene silencing (PTGS), a mechanism of plant viral defense that limits the accumulation of viral RNAs. The protein is Movement and silencing protein TGBp1 of Strawberry mild yellow edge-associated virus (SMYEaV).